Consider the following 402-residue polypeptide: MAQDRKKVLVLGAGYAGLQTVTKLQKELSADAAEITLINKNEYHYESTWLHEASAGTINYEDLLYPVEKTVNKDKVNFVVAEVTKIDRNAKRVETDKGVYDFDILVVALGFVSETFGIDGMKEHAFQIENVLTSRKLSRHIEDKFANYAASKEKDDKDLSILVGGAGFTGIEFLGELTDRIPELCSKYGVDQSKVKLTCVEAAPKMLPMFSDDLVSYAVKYLEDRGVEFKIATPIVACNEKGFVVEVNGEKQQLEAGTSVWTAGVRGSHLMEESFEGVKRGRVINKQDLTIEGHNDIFVIGDCSAFIPAGEERPLPTTAQIAMQQGEHTASNIKRLLNGESTQDFQYVNRGTVCSLGANDGVGIVYGRDIAGKKAAFLKKVIDTRAIYKLGGIGLAFKKGKF.

Residues 12-16, 39-40, and Val83 contribute to the FAD site; these read GAGYA and NK. The active site involves Glu172. Residues Asp302, 319–320, and Lys379 each bind FAD; that span reads AQ.

The protein belongs to the NADH dehydrogenase family. FAD is required as a cofactor.

It localises to the cell membrane. It carries out the reaction a quinone + NADH + H(+) = a quinol + NAD(+). Functionally, alternative, nonproton pumping NADH:quinone oxidoreductase that delivers electrons to the respiratory chain by oxidation of NADH and reduction of quinones, and contributes to the regeneration of NAD(+). In Staphylococcus epidermidis (strain ATCC 35984 / DSM 28319 / BCRC 17069 / CCUG 31568 / BM 3577 / RP62A), this protein is Type II NADH:quinone oxidoreductase.